The primary structure comprises 273 residues: Dermonecrotic toxin LdSicTox-alphaIB1avi (273 aa).

The active site involves H5. Positions 25 and 27 each coordinate Mg(2+). The Nucleophile role is filled by H41. 2 disulfide bridges follow: C45–C51 and C47–C190. D85 provides a ligand contact to Mg(2+). N250 carries an N-linked (GlcNAc...) asparagine glycan.

This sequence belongs to the arthropod phospholipase D family. Class II subfamily. Mg(2+) serves as cofactor. Expressed by the venom gland.

It localises to the secreted. The enzyme catalyses an N-(acyl)-sphingosylphosphocholine = an N-(acyl)-sphingosyl-1,3-cyclic phosphate + choline. It catalyses the reaction an N-(acyl)-sphingosylphosphoethanolamine = an N-(acyl)-sphingosyl-1,3-cyclic phosphate + ethanolamine. The catalysed reaction is a 1-acyl-sn-glycero-3-phosphocholine = a 1-acyl-sn-glycero-2,3-cyclic phosphate + choline. It carries out the reaction a 1-acyl-sn-glycero-3-phosphoethanolamine = a 1-acyl-sn-glycero-2,3-cyclic phosphate + ethanolamine. In terms of biological role, dermonecrotic toxins cleave the phosphodiester linkage between the phosphate and headgroup of certain phospholipids (sphingolipid and lysolipid substrates), forming an alcohol (often choline) and a cyclic phosphate. This toxin acts on sphingomyelin (SM). It may also act on ceramide phosphoethanolamine (CPE), lysophosphatidylcholine (LPC) and lysophosphatidylethanolamine (LPE), but not on lysophosphatidylserine (LPS), and lysophosphatidylglycerol (LPG). It acts by transphosphatidylation, releasing exclusively cyclic phosphate products as second products. Induces dermonecrosis, hemolysis, increased vascular permeability, edema, inflammatory response, and platelet aggregation. This chain is Dermonecrotic toxin LdSicTox-alphaIB1avi, found in Loxosceles deserta (Desert recluse spider).